Here is a 464-residue protein sequence, read N- to C-terminus: Juvenile hormone epoxide hydrolase 1 (464 aa).

The helical transmembrane segment at 7–27 (MLIFAAIAGIAVLYYQITKEL) threads the bilayer. Residue Asp224 is the Nucleophile of the active site. The active-site Proton donor is Tyr370. The active-site Proton acceptor is His427.

It belongs to the peptidase S33 family. In terms of tissue distribution, developing oocytes, fat body and midgut epithelium of adults.

It localises to the microsome membrane. The protein resides in the endoplasmic reticulum membrane. The catalysed reaction is cis-stilbene oxide + H2O = (1R,2R)-hydrobenzoin. It catalyses the reaction 1-(4-methoxyphenyl)-N-methyl-N-[(3-methyloxetan-3-yl)methyl]methanamine + H2O = 2-{[(4-methoxybenzyl)(methyl)amino]methyl}-2-methylpropane-1,3-diol. Functionally, catalyzes juvenile hormone hydrolysis. The protein is Juvenile hormone epoxide hydrolase 1 of Ctenocephalides felis (Cat flea).